The following is a 306-amino-acid chain: Peroxisomal protein PEX21 (306 aa).

A Glycyl cysteine thioester (Cys-Gly) (interchain with G-Cter in ubiquitin) cross-link involves residue Cys4. The segment at 172–203 (ERQVQDDEKEQQQDKDDDFHLKETSPLDEDQR) is disordered.

This sequence belongs to the peroxin-21 family. In terms of assembly, interacts with PEX7. In terms of processing, monoubiquitinated at Cys-4; acts as a signal for PEX21 extraction and is required for proper export from peroxisomes and recycling.

It is found in the cytoplasm. Its subcellular location is the cytosol. It localises to the peroxisome. Its function is as follows. Mediates peroxisomal import of proteins containing a C-terminal PTS2-type peroxisomal targeting signal via its interaction with PEX7. Interaction with PEX7 only takes place when PEX7 is associated with cargo proteins containing a PTS2 peroxisomal targeting signal. PEX7 along with PTS2-containing cargo proteins are then translocated through the PEX13-PEX14 docking complex together with PEX21. The protein is Peroxisomal protein PEX21 (PEX21) of Kluyveromyces lactis (strain ATCC 8585 / CBS 2359 / DSM 70799 / NBRC 1267 / NRRL Y-1140 / WM37) (Yeast).